The following is a 105-amino-acid chain: MIASKFGIGQQVRHSLLGYLGVVVDIDPEYSLDEPSPDELAVNDELRAAPWYHVVMEDDNGQPVHTYLAEAQLRSEMRDEHPEQPSMDELARTIRKQLQAPRLRN.

The tract at residues 77-105 (MRDEHPEQPSMDELARTIRKQLQAPRLRN) is disordered.

Belongs to the HspQ family.

It localises to the cytoplasm. Functionally, involved in the degradation of certain denaturated proteins, including DnaA, during heat shock stress. This is Heat shock protein HspQ from Salmonella arizonae (strain ATCC BAA-731 / CDC346-86 / RSK2980).